Here is a 380-residue protein sequence, read N- to C-terminus: Chaperone protein DnaJ 2 (380 aa).

The J domain occupies 10 to 75 (DYYKILGVSK…KKRKEYDQAR (66 aa)). Residues 32–56 (KIARDNHPDSHPGDKAAEARFKEAS) show a composition bias toward basic and acidic residues. Residues 32–63 (KIARDNHPDSHPGDKAAEARFKEASEANDVLS) are disordered. The CR-type zinc-finger motif lies at 151–230 (GTTVTMDMVS…CHGSGRAKST (80 aa)). Residues cysteine 164, cysteine 167, cysteine 181, cysteine 184, cysteine 204, cysteine 207, cysteine 218, and cysteine 221 each coordinate Zn(2+). CXXCXGXG motif repeat units lie at residues 164 to 171 (CQACRGTG), 181 to 188 (CSTCQGSG), 204 to 211 (CPDCHGRG), and 218 to 225 (CQVCHGSG).

The protein belongs to the DnaJ family. As to quaternary structure, homodimer. Requires Zn(2+) as cofactor.

The protein resides in the cytoplasm. Functionally, participates actively in the response to hyperosmotic and heat shock by preventing the aggregation of stress-denatured proteins and by disaggregating proteins, also in an autonomous, DnaK-independent fashion. Unfolded proteins bind initially to DnaJ; upon interaction with the DnaJ-bound protein, DnaK hydrolyzes its bound ATP, resulting in the formation of a stable complex. GrpE releases ADP from DnaK; ATP binding to DnaK triggers the release of the substrate protein, thus completing the reaction cycle. Several rounds of ATP-dependent interactions between DnaJ, DnaK and GrpE are required for fully efficient folding. Also involved, together with DnaK and GrpE, in the DNA replication of plasmids through activation of initiation proteins. This Cutibacterium acnes (strain DSM 16379 / KPA171202) (Propionibacterium acnes) protein is Chaperone protein DnaJ 2.